Reading from the N-terminus, the 438-residue chain is MNENAPTHKSSHKVKTHTPVSGYHIEDLRTYPTEKLLEIANKLKVENPQEFKRQDLMFEILKTQVTQGGYILFTGILEIMPDGYGFLRGFDGSFSDGHNDTYVSPSQIRRFALRNGDIVTGQVRSPKDQEKYYALLKIEAINYLPSDEIKNRPLFDNLTPLFPDEQIKLEYEPTKVTGRMLDLFSPVGKGQRALIVAPPRTGKTELMKELAQGITSNHPEVELIILLVDERPEEVTDMQRSVKGQVFSSTFDLPANNHIRIAELVLERAKRRVEMGKDVVVLLDSITRLARAYNAVTPSSGKVLSGGVDANALHRPKRFFGAARNIEEGGSLTIIATALIETGSRMDEVIFEEFKGTGNSEIVLARNIADRRIYPAFDILKSGTRKDNILLGKDRLTKVWVLRNVMQQMDDIEALSFVYSKMQQTKDNEEFLNLMNEK.

One can recognise a Rho RNA-BD domain in the interval 70 to 145 (YILFTGILEI…LKIEAINYLP (76 aa)). ATP-binding positions include 188–193 (GKGQRA), 200–205 (RTGKTE), and arginine 231.

It belongs to the Rho family. Homohexamer. The homohexamer assembles into an open ring structure.

Its function is as follows. Facilitates transcription termination by a mechanism that involves Rho binding to the nascent RNA, activation of Rho's RNA-dependent ATPase activity, and release of the mRNA from the DNA template. This Helicobacter pylori (strain J99 / ATCC 700824) (Campylobacter pylori J99) protein is Transcription termination factor Rho.